The following is an 855-amino-acid chain: Receptor-like protein kinase THESEUS 1 (855 aa).

A signal peptide spans M1–S22. The Extracellular segment spans residues S23–K415. Residues N41, N64, N75, N114, N118, N136, N143, N154, N168, N225, N242, N288, N353, and N376 are each glycosylated (N-linked (GlcNAc...) asparagine). The helical transmembrane segment at A416 to C436 threads the bilayer. The Cytoplasmic portion of the chain corresponds to Y437 to R855. The region spanning F510–A783 is the Protein kinase domain. Residues L516–V524 and K538 contribute to the ATP site. D634 (proton acceptor) is an active-site residue. The interval I822–R855 is disordered.

Belongs to the protein kinase superfamily. Ser/Thr protein kinase family. Autophosphorylated. In terms of tissue distribution, expressed in most vegetative tissues, including leaves, stems and roots, primarily in expanding cells and vascular tissue.

Its subcellular location is the cell membrane. Receptor-like protein kinase required for cell elongation during vegetative growth, mostly in a brassinosteroid-(BR-) independent manner. Mediates the response of growing plant cells to the perturbation of cellulose synthesis and may act as a cell-wall-integrity sensor. Controls ectopic-lignin accumulation in cellulose-deficient mutant backgrounds. This Arabidopsis thaliana (Mouse-ear cress) protein is Receptor-like protein kinase THESEUS 1 (THE1).